The chain runs to 326 residues: G-protein coupled receptor 1 (326 aa).

Ser2 carries the post-translational modification N-acetylserine. Over 2 to 23 the chain is Extracellular; the sequence is SAVLTAGGGLTAGDRSIITAIN. The helical transmembrane segment at 24 to 44 threads the bilayer; it reads TGASSLSFVGSAFIVLCYCLF. Residues 45-51 are Cytoplasmic-facing; it reads KELRKFS. A helical membrane pass occupies residues 52–72; sequence FKLVFYLALSDMLCSFFLIVG. Over 73–84 the chain is Extracellular; the sequence is DPSKGFICYAQG. Cys80 and Cys151 are joined by a disulfide. The chain crosses the membrane as a helical span at residues 85–105; the sequence is YTTHFFCVASFLWTTTIAFTL. At 106 to 120 the chain is on the cytoplasmic side; that stretch reads HRTVVKHKTDVEDLE. A helical membrane pass occupies residues 121–141; it reads AMFHLYVWGTSLVVTVIRSFG. Residues 142 to 160 are Extracellular-facing; sequence NNHSHLGPWCWTQTGLKGK. N-linked (GlcNAc...) asparagine glycosylation occurs at Asn143. Residues 161–181 form a helical membrane-spanning segment; it reads AVHFLTFYAPLWGAILYNGFT. Residues 182-213 lie on the Cytoplasmic side of the membrane; the sequence is YFQVIRMLRNARRMAVGMSDRVDQFDNRAELK. Residues 214-234 traverse the membrane as a helical segment; the sequence is VLNRWGYYPLILIGSWAFGTI. Residues 235 to 246 are Extracellular-facing; it reads NRIHDFIEPGHK. A helical membrane pass occupies residues 247 to 267; it reads IFWLSVLDVGTAALMGLFNSI. Residues 268–326 lie on the Cytoplasmic side of the membrane; it reads AYGFNSSVRRAIHERLELFLPERLYRWLPSNFRPKNHLILHQQQQQRSEMVSLKTEDQQ.

This sequence belongs to the G-protein coupled receptor 2 family. Interacts with GPA1. In terms of tissue distribution, mostly present in the meristematic regions. Expressed at low levels in seedlings, vascular tissues of cotyledons, hypocotyl, and roots, stems, leaves, flowering buds and siliques. In dark-grown seedlings, localized in the cotyledons and the hook.

It localises to the cell membrane. Functionally, together with GPA1, may regulate the cell cycle via a signaling cascade that uses phosphatidylinositol-specific phospholipase C (PI-PLC) as an effector and inositol 1,4,5-trisphosphate(IP(3)) as a second messenger. Promotes PI-PLC activity and IP(3) accumulation. Involved in the blue light (BL) signaling. Together with GPA1 and ADT3, required for BL-mediated synthesis of phenylpyruvate and subsequently of phenylalanine (Phe), in etiolated seedlings. Probably involved in cytokinin signal transduction. Plays a positive role in gibberellin- (GA) and brassinosteroid- (BR) regulated seed germination, probably independently of a heterotrimeric G-protein. Mediates seed dormancy abolition, and promotes seed germination and flowering. This is G-protein coupled receptor 1 (GCR1) from Arabidopsis thaliana (Mouse-ear cress).